The following is a 124-amino-acid chain: Chorion class high-cysteine HCA protein 12 (124 aa).

A signal peptide spans Met-1–Gly-21. Residues Gln-22–Gly-35 are left arm. A central domain region spans residues Cys-36–Ile-83. Residues Cys-84–Cys-124 form a right arm (Gly- and Cys-rich tandem repeats) region.

Belongs to the chorion protein family.

Functionally, this protein is one of many from the eggshell of the silk moth. The polypeptide is Chorion class high-cysteine HCA protein 12 (Bombyx mori (Silk moth)).